The following is an 874-amino-acid chain: Alanine--tRNA ligase (874 aa).

Residues histidine 562, histidine 566, cysteine 665, and histidine 669 each contribute to the Zn(2+) site.

The protein belongs to the class-II aminoacyl-tRNA synthetase family. The cofactor is Zn(2+).

It is found in the cytoplasm. The enzyme catalyses tRNA(Ala) + L-alanine + ATP = L-alanyl-tRNA(Ala) + AMP + diphosphate. Its function is as follows. Catalyzes the attachment of alanine to tRNA(Ala) in a two-step reaction: alanine is first activated by ATP to form Ala-AMP and then transferred to the acceptor end of tRNA(Ala). Also edits incorrectly charged Ser-tRNA(Ala) and Gly-tRNA(Ala) via its editing domain. This chain is Alanine--tRNA ligase, found in Pseudomonas syringae pv. tomato (strain ATCC BAA-871 / DC3000).